The following is a 4639-amino-acid chain: Dynein heavy chain, cytoplasmic (4639 aa).

Positions 1-1856 are stem; sequence MGDSLENPDT…TIHMANARFF (1856 aa). Coiled-coil stretches lie at residues 530–565, 774–794, and 1264–1368; these read LDIT…LRDQ, SLIE…DRAS, and DDAL…ARLR. AAA regions lie at residues 1857–2084, 2166–2437, 2541–2790, and 2884–3153; these read YGFE…VLIS, EEIR…FTRL, EVET…WVRG, and VFYE…GGRT. ATP contacts are provided by residues 1895-1902, 2210-2217, 2580-2587, and 2922-2929; these read GPAGTGKT, GPSGSGKS, GPPGSGKT, and GVSGAGKT. 3 coiled-coil regions span residues 3189-3261, 3382-3478, and 3723-3782; these read GLNK…EKRK, AIAQ…WEST, and EFRL…EIET. The stalk stretch occupies residues 3189–3478; the sequence is GLNKIAETVE…NIERERWEST (290 aa). AAA stretches follow at residues 3539–3768 and 3989–4205; these read LSNP…DINQ and AHNV…TLDT.

The protein belongs to the dynein heavy chain family. As to quaternary structure, consists of at least two heavy chains and a number of intermediate and light chains.

It localises to the cytoplasm. The protein localises to the cytoskeleton. Its function is as follows. Cytoplasmic dynein acts as a motor for the intracellular retrograde motility of vesicles and organelles along microtubules. Dynein has ATPase activity; the force-producing power stroke is thought to occur on release of ADP. This Drosophila melanogaster (Fruit fly) protein is Dynein heavy chain, cytoplasmic (Dhc64C).